Here is a 311-residue protein sequence, read N- to C-terminus: Immune-associated nucleotide-binding protein 7 (311 aa).

Residues 14 to 222 (KQAENIVLVG…YTDDTYHMIK (209 aa)) form the AIG1-type G domain. The interval 23 to 30 (GRTGNGKS) is G1. GTP-binding positions include 23-31 (GRTGNGKSA) and Ser-44. Positions 50 to 54 (GVTMK) are G2. Residues 72–75 (DTPG) form a G3 region. A G4 region spans residues 142–145 (TGGD). The interval 181 to 183 (DNK) is G5. Asn-182 contacts GTP. A coiled-coil region spans residues 218-295 (YHMIKEESEK…TQENNELNLA (78 aa)).

This sequence belongs to the TRAFAC class TrmE-Era-EngA-EngB-Septin-like GTPase superfamily. AIG1/Toc34/Toc159-like paraseptin GTPase family. IAN subfamily. Ubiquitous.

The sequence is that of Immune-associated nucleotide-binding protein 7 from Arabidopsis thaliana (Mouse-ear cress).